Here is a 199-residue protein sequence, read N- to C-terminus: UPF0462 protein C4orf33 homolog (199 aa).

This sequence belongs to the UPF0462 family.

The chain is UPF0462 protein C4orf33 homolog from Rattus norvegicus (Rat).